The following is a 400-amino-acid chain: Phosphoglycerate kinase (400 aa).

Substrate contacts are provided by residues 21-23 (DLN), arginine 36, 59-62 (HLGR), arginine 116, and arginine 149. ATP contacts are provided by residues lysine 200, glutamate 317, and 343–346 (GGDT).

The protein belongs to the phosphoglycerate kinase family. In terms of assembly, monomer.

The protein resides in the cytoplasm. It carries out the reaction (2R)-3-phosphoglycerate + ATP = (2R)-3-phospho-glyceroyl phosphate + ADP. It participates in carbohydrate degradation; glycolysis; pyruvate from D-glyceraldehyde 3-phosphate: step 2/5. In Blochmanniella floridana, this protein is Phosphoglycerate kinase.